Here is a 760-residue protein sequence, read N- to C-terminus: General transcription and DNA repair factor IIH helicase subunit XPD (760 aa).

The Helicase ATP-binding domain occupies 7–283 (GLLVYFPYDY…KETDEQRLRD (277 aa)). Residue 42-49 (MPSGTGKT) coordinates ATP. The [4Fe-4S] cluster site is built by Cys-116, Cys-134, Cys-155, and Cys-190. The short motif at 234–237 (DEAH) is the DEAH box element. The mediates interaction with MMS19 stretch occupies residues 438-637 (MDASLAIKPV…TQSRILKARL (200 aa)). Residues 682–695 (KRFARGDKRGKLPR) carry the Nuclear localization signal motif.

This sequence belongs to the helicase family. RAD3/XPD subfamily. As to quaternary structure, component of the 7-subunit TFIIH core complex composed of XPB/ERCC3, XPD/ERCC2, GTF2H1, GTF2H2, GTF2H3, GTF2H4 and GTF2H5, which is active in NER. The core complex associates with the 3-subunit CDK-activating kinase (CAK) module composed of CCNH/cyclin H, CDK7 and MNAT1 to form the 10-subunit holoenzyme (holo-TFIIH) active in transcription. Interacts with GTF2H2 (p44) which stimulates the 5'-3' helicase activity of this subunit. Component of the MMXD complex, which includes CIAO1, ERCC2, CIAO2B, MMS19 and SLC25A5. Interacts with CIAO1 and CIAO2B; the interaction WITH CIAO2B is direct. Interacts with ATF7IP. Interacts directly with MMS19. Part of TBP-based Pol II pre-initiation complex (PIC), in which Pol II core assembles with general transcription factors and other specific initiation factors including GTF2E1, GTF2E2, GTF2F1, GTF2F2, TCEA1, ERCC2, ERCC3, GTF2H2, GTF2H3, GTF2H4, GTF2H5, GTF2A1, GTF2A2, GTF2B and TBP; this large multi-subunit PIC complex mediates DNA unwinding and targets Pol II core to the transcription start site where the first phosphodiester bond forms. (Microbial infection) Interacts with Epstein-Barr virus EBNA2. Mg(2+) is required as a cofactor. It depends on [4Fe-4S] cluster as a cofactor. In terms of processing, ISGylated.

Its subcellular location is the nucleus. The protein resides in the cytoplasm. It localises to the cytoskeleton. It is found in the spindle. It catalyses the reaction Couples ATP hydrolysis with the unwinding of duplex DNA at the replication fork by translocating in the 5'-3' direction. This creates two antiparallel DNA single strands (ssDNA). The leading ssDNA polymer is the template for DNA polymerase III holoenzyme which synthesizes a continuous strand.. The enzyme catalyses ATP + H2O = ADP + phosphate + H(+). Interaction with GTF2H2 (p44) results in stimulation of the 5'-3' helicase activity of this subunit. DNA unwinding by this subunit in TFIIH is stimulated 4-fold by XPA and 20-fold by ERCC5/XPG. Functionally, ATP-dependent 5'-3' DNA helicase. Component of the general transcription and DNA repair factor IIH (TFIIH) core complex, not absolutely essential for minimal transcription in vitro. Required for transcription-coupled nucleotide excision repair (NER) of damaged DNA; recognizes damaged bases. Sequestered in chromatin on UV-damaged DNA. When complexed to CDK-activating kinase (CAK), involved in transcription by RNA polymerase II. In NER, TFIIH acts by opening DNA around the lesion to allow the excision of the damaged oligonucleotide and its replacement by a new DNA fragment. The ATP-dependent helicase activity of XPD/ERCC2 is required for DNA opening. Involved in DNA lesion verification. In transcription, TFIIH has an essential role in transcription initiation. When the pre-initiation complex (PIC) has been established, TFIIH is required for promoter opening and promoter escape. Phosphorylation of the C-terminal tail (CTD) of the largest subunit of RNA polymerase II by the kinase module CAK controls the initiation of transcription. XPD/ERCC2 acts by forming a bridge between CAK and the core-TFIIH complex. The structure of the TFIIH transcription complex differs from the NER-TFIIH complex; large movements by XPD/ERCC2 and XPB/ERCC3 are stabilized by XPA which allow this subunit to contact ssDNA. Involved in the regulation of vitamin-D receptor activity. As part of the mitotic spindle-associated MMXD complex it plays a role in chromosome segregation. Might have a role in aging process and could play a causative role in the generation of skin cancers. The protein is General transcription and DNA repair factor IIH helicase subunit XPD (ERCC2) of Homo sapiens (Human).